A 447-amino-acid polypeptide reads, in one-letter code: Rab GDP dissociation inhibitor alpha (447 aa).

It belongs to the Rab GDI family. Interacts with RHOH. Interacts with the non-phosphorylated forms of RAB1A, RAB3A, RAB5A, RAB5B, RAB5C, RAB8A, RAB8B, RAB10, RAB12, RAB35, and RAB43.

It localises to the cytoplasm. Its subcellular location is the golgi apparatus. The protein localises to the trans-Golgi network. In terms of biological role, regulates the GDP/GTP exchange reaction of most Rab proteins by inhibiting the dissociation of GDP from them, and the subsequent binding of GTP to them. Promotes the dissociation of GDP-bound Rab proteins from the membrane and inhibits their activation. Promotes the dissociation of RAB1A, RAB3A, RAB5A and RAB10 from membranes. This is Rab GDP dissociation inhibitor alpha (GDI1) from Pongo pygmaeus (Bornean orangutan).